A 924-amino-acid chain; its full sequence is 104 kDa microneme/rhoptry antigen (924 aa).

An N-terminal signal peptide occupies residues 1–19 (MKFLILLFNILCLFPVLAA). Residues 490 to 907 (SKKKLAPITE…KKPKKPDSAY (418 aa)) form a disordered region. 2 stretches are compositionally biased toward basic and acidic residues: residues 522-532 (PGDKEGSEGHK) and 573-588 (GPKDPKHPRDPKEPRK). Positions 592 to 617 (PRTASPTRRPSPKLPQLSKLPKSTSP) are enriched in low complexity. Basic and acidic residues predominate over residues 653–673 (SFKEKFYDDYSKAASRSKETK). Over residues 724 to 736 (SPSTSPSEFFTPP) the composition is skewed to low complexity. Composition is skewed to basic and acidic residues over residues 737 to 747 (ESKRTRFHETP), 770 to 783 (KSPDEAMKRPRSPS), and 816 to 825 (DPGRMAKDAS). Residues 857–867 (DDEGTEADDEE) are compositionally biased toward acidic residues. Basic and acidic residues predominate over residues 868-878 (THPPEERQKTE). The span at 879 to 901 (VRRRRPPKKPSKSPRPSKPKKPK) shows a compositional bias: basic residues. The GPI-anchor amidated aspartate moiety is linked to residue Asp904. A propeptide spans 905-924 (SAYIPSILAILVVSLIVGIL) (removed in mature form).

It is found in the cell membrane. In Theileria parva (East coast fever infection agent), this protein is 104 kDa microneme/rhoptry antigen.